Here is a 209-residue protein sequence, read N- to C-terminus: Large ribosomal subunit protein uL3 (209 aa).

Gln-150 is modified (N5-methylglutamine).

The protein belongs to the universal ribosomal protein uL3 family. Part of the 50S ribosomal subunit. Forms a cluster with proteins L14 and L19. In terms of processing, methylated by PrmB.

Functionally, one of the primary rRNA binding proteins, it binds directly near the 3'-end of the 23S rRNA, where it nucleates assembly of the 50S subunit. In Vibrio campbellii (strain ATCC BAA-1116), this protein is Large ribosomal subunit protein uL3.